Consider the following 500-residue polypeptide: Probable cytosol aminopeptidase (500 aa).

2 residues coordinate Mn(2+): K265 and D270. K277 is an active-site residue. Positions 288, 347, and 349 each coordinate Mn(2+). R351 is a catalytic residue.

It belongs to the peptidase M17 family. Requires Mn(2+) as cofactor.

The protein resides in the cytoplasm. It carries out the reaction Release of an N-terminal amino acid, Xaa-|-Yaa-, in which Xaa is preferably Leu, but may be other amino acids including Pro although not Arg or Lys, and Yaa may be Pro. Amino acid amides and methyl esters are also readily hydrolyzed, but rates on arylamides are exceedingly low.. The catalysed reaction is Release of an N-terminal amino acid, preferentially leucine, but not glutamic or aspartic acids.. Its function is as follows. Presumably involved in the processing and regular turnover of intracellular proteins. Catalyzes the removal of unsubstituted N-terminal amino acids from various peptides. In Rickettsia massiliae (strain Mtu5), this protein is Probable cytosol aminopeptidase.